The sequence spans 238 residues: Ribonuclease 3 (238 aa).

One can recognise an RNase III domain in the interval 4–127 (IEEFEKRLGY…TMGAIYLETG (124 aa)). Position 40 (Glu40) interacts with Mg(2+). Residue Asp44 is part of the active site. Mg(2+) contacts are provided by Asn113 and Glu116. The active site involves Glu116. Residues 154-223 (DYKTALQELT…ARIALEIFHR (70 aa)) form the DRBM domain.

The protein belongs to the ribonuclease III family. As to quaternary structure, homodimer. Mg(2+) is required as a cofactor.

The protein localises to the cytoplasm. The catalysed reaction is Endonucleolytic cleavage to 5'-phosphomonoester.. Digests double-stranded RNA. Involved in the processing of primary rRNA transcript to yield the immediate precursors to the large and small rRNAs (23S and 16S). Processes some mRNAs, and tRNAs when they are encoded in the rRNA operon. Processes pre-crRNA and tracrRNA of type II CRISPR loci if present in the organism. This is Ribonuclease 3 from Wolinella succinogenes (strain ATCC 29543 / DSM 1740 / CCUG 13145 / JCM 31913 / LMG 7466 / NCTC 11488 / FDC 602W) (Vibrio succinogenes).